A 199-amino-acid polypeptide reads, in one-letter code: Recombination protein RecR (199 aa).

The segment at 58–73 adopts a C4-type zinc-finger fold; that stretch reads CRRCFNLTEGEECDIC. The region spanning 81-176 is the Toprim domain; sequence SVICVVEDPY…RVTALASGLP (96 aa).

Belongs to the RecR family.

In terms of biological role, may play a role in DNA repair. It seems to be involved in an RecBC-independent recombinational process of DNA repair. It may act with RecF and RecO. This is Recombination protein RecR from Rubrobacter xylanophilus (strain DSM 9941 / JCM 11954 / NBRC 16129 / PRD-1).